The primary structure comprises 309 residues: Glutaminase (309 aa).

Residues Ser-64, Asn-114, Glu-160, Asn-167, Tyr-191, Tyr-243, and Val-261 each contribute to the substrate site.

The protein belongs to the glutaminase family. In terms of assembly, homotetramer.

The catalysed reaction is L-glutamine + H2O = L-glutamate + NH4(+). This Agrobacterium fabrum (strain C58 / ATCC 33970) (Agrobacterium tumefaciens (strain C58)) protein is Glutaminase.